A 282-amino-acid polypeptide reads, in one-letter code: Undecaprenyl-diphosphatase (282 aa).

Transmembrane regions (helical) follow at residues 45 to 65, 86 to 106, 114 to 134, 151 to 171, 196 to 216, 224 to 244, and 256 to 276; these read AFME…VVFI, WQLW…GIPL, FHNF…FILI, LPYK…FPGT, FFLG…KFIL, GQLT…MYVI, and FTVF…YWVF.

This sequence belongs to the UppP family.

The protein localises to the cell membrane. The catalysed reaction is di-trans,octa-cis-undecaprenyl diphosphate + H2O = di-trans,octa-cis-undecaprenyl phosphate + phosphate + H(+). Catalyzes the dephosphorylation of undecaprenyl diphosphate (UPP). Confers resistance to bacitracin. This is Undecaprenyl-diphosphatase from Streptococcus gordonii (strain Challis / ATCC 35105 / BCRC 15272 / CH1 / DL1 / V288).